Here is a 456-residue protein sequence, read N- to C-terminus: Alcohol acyltransferase 17 (456 aa).

Catalysis depends on proton acceptor residues His166 and Asp382.

This sequence belongs to the plant acyltransferase family. As to expression, expressed in fruit.

In terms of biological role, involved in the biosynthesis of volatile esters which confer kiwifruit flavor. Alcohol acyl transferase that can use a wide range of alcohols as substrate to produce esters. The protein is Alcohol acyltransferase 17 of Actinidia deliciosa (Kiwi).